The following is a 31-amino-acid chain: leu operon leader peptide (31 aa).

Involved in control of the biosynthesis of leucine. The sequence is that of leu operon leader peptide (leuL) from Buchnera aphidicola subsp. Rhopalosiphum padi.